Consider the following 514-residue polypeptide: 2,3-bisphosphoglycerate-independent phosphoglycerate mutase (514 aa).

Mn(2+)-binding residues include aspartate 14 and serine 64. Serine 64 functions as the Phosphoserine intermediate in the catalytic mechanism. Substrate-binding positions include histidine 125, 155 to 156 (RD), arginine 187, arginine 193, 263 to 266 (RADR), and lysine 336. Residues aspartate 403, histidine 407, aspartate 444, histidine 445, and histidine 463 each contribute to the Mn(2+) site.

Belongs to the BPG-independent phosphoglycerate mutase family. Monomer. Mn(2+) serves as cofactor.

It catalyses the reaction (2R)-2-phosphoglycerate = (2R)-3-phosphoglycerate. The protein operates within carbohydrate degradation; glycolysis; pyruvate from D-glyceraldehyde 3-phosphate: step 3/5. In terms of biological role, catalyzes the interconversion of 2-phosphoglycerate and 3-phosphoglycerate. This is 2,3-bisphosphoglycerate-independent phosphoglycerate mutase from Escherichia coli O6:H1 (strain CFT073 / ATCC 700928 / UPEC).